Here is a 119-residue protein sequence, read N- to C-terminus: Large ribosomal subunit protein bL20 (119 aa).

It belongs to the bacterial ribosomal protein bL20 family.

Its function is as follows. Binds directly to 23S ribosomal RNA and is necessary for the in vitro assembly process of the 50S ribosomal subunit. It is not involved in the protein synthesizing functions of that subunit. This is Large ribosomal subunit protein bL20 from Mycoplasma capricolum subsp. capricolum (strain California kid / ATCC 27343 / NCTC 10154).